The primary structure comprises 478 residues: V-type proton ATPase subunit H (478 aa).

Belongs to the V-ATPase H subunit family. V-ATPase is a heteromultimeric enzyme composed of a peripheral catalytic V1 complex (components A to H) attached to an integral membrane V0 proton pore complex (components: a, c, c', c'', d, e, f and VOA1). Interacts with YND1.

The protein localises to the vacuole membrane. Functionally, subunit of the V1 complex of vacuolar(H+)-ATPase (V-ATPase), a multisubunit enzyme composed of a peripheral complex (V1) that hydrolyzes ATP and a membrane integral complex (V0) that translocates protons. V-ATPase is responsible for acidifying and maintaining the pH of intracellular compartments. This subunit is essential for activity, but not assembly, of the enzyme complex. This subunit is also required for silencing the ATPase activity of V-ATPase when V1 is detached from V0. The polypeptide is V-type proton ATPase subunit H (Saccharomyces cerevisiae (strain ATCC 204508 / S288c) (Baker's yeast)).